Here is a 394-residue protein sequence, read N- to C-terminus: NAD(P)H-quinone oxidoreductase subunit H (394 aa).

It belongs to the complex I 49 kDa subunit family. As to quaternary structure, NDH-1 can be composed of about 15 different subunits; different subcomplexes with different compositions have been identified which probably have different functions.

It is found in the cellular thylakoid membrane. It carries out the reaction a plastoquinone + NADH + (n+1) H(+)(in) = a plastoquinol + NAD(+) + n H(+)(out). The catalysed reaction is a plastoquinone + NADPH + (n+1) H(+)(in) = a plastoquinol + NADP(+) + n H(+)(out). Its function is as follows. NDH-1 shuttles electrons from an unknown electron donor, via FMN and iron-sulfur (Fe-S) centers, to quinones in the respiratory and/or the photosynthetic chain. The immediate electron acceptor for the enzyme in this species is believed to be plastoquinone. Couples the redox reaction to proton translocation, and thus conserves the redox energy in a proton gradient. Cyanobacterial NDH-1 also plays a role in inorganic carbon-concentration. This Prochlorococcus marinus (strain MIT 9313) protein is NAD(P)H-quinone oxidoreductase subunit H.